A 280-amino-acid chain; its full sequence is Bifunctional protein FolD (280 aa).

NADP(+) contacts are provided by residues 165 to 167, Ser-190, and Ile-231; that span reads GRS.

The protein belongs to the tetrahydrofolate dehydrogenase/cyclohydrolase family. As to quaternary structure, homodimer.

It catalyses the reaction (6R)-5,10-methylene-5,6,7,8-tetrahydrofolate + NADP(+) = (6R)-5,10-methenyltetrahydrofolate + NADPH. The enzyme catalyses (6R)-5,10-methenyltetrahydrofolate + H2O = (6R)-10-formyltetrahydrofolate + H(+). Its pathway is one-carbon metabolism; tetrahydrofolate interconversion. In terms of biological role, catalyzes the oxidation of 5,10-methylenetetrahydrofolate to 5,10-methenyltetrahydrofolate and then the hydrolysis of 5,10-methenyltetrahydrofolate to 10-formyltetrahydrofolate. This Moorella thermoacetica (strain ATCC 39073 / JCM 9320) protein is Bifunctional protein FolD.